A 590-amino-acid chain; its full sequence is Multidrug resistance-like ATP-binding protein MdlA (590 aa).

One can recognise an ABC transmembrane type-1 domain in the interval 18–303 (YLGAVALLVI…LAWMFNIVER (286 aa)). 6 consecutive transmembrane segments (helical) span residues 23–43 (ALLV…GIVV), 53–73 (TGQI…VYLL), 134–154 (GVLT…MMST), 155–175 (QISW…AIMI), 248–268 (IYIA…WMVV), and 280–300 (FMMY…MFNI). The region spanning 337–570 (VNIHQFTYPQ…SGWYRDMYRY (234 aa)) is the ABC transporter domain. Position 369–376 (369–376 (GPTGSGKS)) interacts with ATP.

This sequence belongs to the ABC transporter superfamily. Drug exporter-2 (TC 3.A.1.117) family.

The protein localises to the cell inner membrane. It carries out the reaction ATP + H2O + xenobioticSide 1 = ADP + phosphate + xenobioticSide 2.. This Escherichia coli (strain K12) protein is Multidrug resistance-like ATP-binding protein MdlA (mdlA).